Here is a 261-residue protein sequence, read N- to C-terminus: Cell division protein B (261 aa).

The interval 213-261 (SEDMILNYIKTTGGFIDVDYIAKNFDVSKDEVFNVLRRLEEKGLIVLEG) is winged-helix-like fold.

Interacts with CdvA. Interacts with CdvC.

It is found in the cytoplasm. It localises to the nucleoid. Its function is as follows. Part of a cell division machinery. The CdvA, CdvB and CdvC proteins polymerize between segregating nucleoids and persist throughout cell division, forming a successively smaller structure during constriction. The chain is Cell division protein B from Sulfolobus acidocaldarius (strain ATCC 33909 / DSM 639 / JCM 8929 / NBRC 15157 / NCIMB 11770).